We begin with the raw amino-acid sequence, 496 residues long: Probable malate:quinone oxidoreductase (496 aa).

Belongs to the MQO family. It depends on FAD as a cofactor.

The catalysed reaction is (S)-malate + a quinone = a quinol + oxaloacetate. The protein operates within carbohydrate metabolism; tricarboxylic acid cycle; oxaloacetate from (S)-malate (quinone route): step 1/1. The protein is Probable malate:quinone oxidoreductase of Flavobacterium psychrophilum (strain ATCC 49511 / DSM 21280 / CIP 103535 / JIP02/86).